Reading from the N-terminus, the 419-residue chain is UDP-N-acetylglucosamine 1-carboxyvinyltransferase (419 aa).

22–23 (KN) contacts phosphoenolpyruvate. Arg93 is a UDP-N-acetyl-alpha-D-glucosamine binding site. The active-site Proton donor is Cys117. Cys117 is modified (2-(S-cysteinyl)pyruvic acid O-phosphothioketal). 2 residues coordinate UDP-N-acetyl-alpha-D-glucosamine: Asp307 and Ile329.

Belongs to the EPSP synthase family. MurA subfamily.

It is found in the cytoplasm. The enzyme catalyses phosphoenolpyruvate + UDP-N-acetyl-alpha-D-glucosamine = UDP-N-acetyl-3-O-(1-carboxyvinyl)-alpha-D-glucosamine + phosphate. It participates in cell wall biogenesis; peptidoglycan biosynthesis. Its function is as follows. Cell wall formation. Adds enolpyruvyl to UDP-N-acetylglucosamine. This is UDP-N-acetylglucosamine 1-carboxyvinyltransferase from Shewanella sp. (strain MR-7).